Here is a 131-residue protein sequence, read N- to C-terminus: Two-component response regulator ORR3 (131 aa).

Residues 12-129 (HVLAVDDSIV…DVSRLCNRVI (118 aa)) enclose the Response regulatory domain. Position 62 is a 4-aspartylphosphate (Asp-62).

The protein belongs to the ARR family. Type-A subfamily. Post-translationally, two-component system major event consists of a His-to-Asp phosphorelay between a sensor histidine kinase (HK) and a response regulator (RR). In plants, the His-to-Asp phosphorelay involves an additional intermediate named Histidine-containing phosphotransfer protein (HPt). This multistep phosphorelay consists of a His-Asp-His-Asp sequential transfer of a phosphate group between first a His and an Asp of the HK protein, followed by the transfer to a conserved His of the HPt protein and finally the transfer to an Asp in the receiver domain of the RR protein. Expressed in roots, mature leaves and flowers, and at low levels in shoots.

Functionally, functions as a response regulator involved in His-to-Asp phosphorelay signal transduction system. Phosphorylation of the Asp residue in the receiver domain activates the ability of the protein to promote the transcription of target genes. Type-A response regulators seem to act as negative regulators of the cytokinin signaling. This Oryza sativa subsp. indica (Rice) protein is Two-component response regulator ORR3.